Consider the following 336-residue polypeptide: Inositol 2-dehydrogenase (336 aa).

This sequence belongs to the Gfo/Idh/MocA family. In terms of assembly, homotetramer.

It catalyses the reaction myo-inositol + NAD(+) = scyllo-inosose + NADH + H(+). In terms of biological role, involved in the oxidation of myo-inositol (MI) to 2-keto-myo-inositol (2KMI or 2-inosose). The chain is Inositol 2-dehydrogenase from Pseudomonas fluorescens (strain ATCC BAA-477 / NRRL B-23932 / Pf-5).